Here is a 245-residue protein sequence, read N- to C-terminus: Phosducin (245 aa).

Over residues 1 to 14 the composition is skewed to acidic residues; that stretch reads MEEAKSQSLEEDFE. Positions 1-68 are disordered; it reads MEEAKSQSLE…RDNKDSKERF (68 aa). One can recognise a Phosducin domain in the interval 1-241; sequence MEEAKSQSLE…THALDQTNME (241 aa). A compositionally biased stretch (basic and acidic residues) spans 59–68; sequence RDNKDSKERF. A Phosphoserine; by PKA modification is found at S73. Residues 111-245 are thioredoxin fold; that stretch reads YGFVYELETG…DQTNMEEDIE (135 aa).

The protein belongs to the phosducin family. Interacts with CRX. Forms a complex with the beta and gamma subunits of the GTP-binding protein, transducin. Light-induced changes in cyclic nucleotide levels modulate the phosphorylation of this protein by cAMP kinase.

Its subcellular location is the cytoplasm. The protein resides in the cytosol. The protein localises to the nucleus. It is found in the cell projection. It localises to the cilium. Its subcellular location is the photoreceptor outer segment. The protein resides in the photoreceptor inner segment. Inhibits the transcriptional activation activity of the cone-rod homeobox CRX. May participate in the regulation of visual phototransduction or in the integration of photoreceptor metabolism. The protein is Phosducin (PDC) of Felis catus (Cat).